The following is a 414-amino-acid chain: 26S proteasome regulatory subunit 6B homolog (414 aa).

The segment at 1–33 (MAATMVLDPKPSSTPPPTLPNPYTTDSQSTDSE) is disordered. A compositionally biased stretch (low complexity) spans 21 to 30 (NPYTTDSQST). Residues 55–81 (EYVKDELKNLKREQLRSQEEVKRIQSV) are a coiled coil. An ATP-binding site is contributed by 202–209 (GPPGTGKT).

The protein belongs to the AAA ATPase family.

The protein resides in the cytoplasm. The protein localises to the nucleus. In terms of biological role, the 26S proteasome is involved in the ATP-dependent degradation of ubiquitinated proteins. The regulatory (or ATPase) complex confers ATP dependency and substrate specificity to the 26S complex. This chain is 26S proteasome regulatory subunit 6B homolog, found in Helianthus annuus (Common sunflower).